Here is a 449-residue protein sequence, read N- to C-terminus: UDP-N-acetylmuramoylalanine--D-glutamate ligase (449 aa).

Residue Gly113 to Thr119 coordinates ATP.

It belongs to the MurCDEF family.

The protein localises to the cytoplasm. The catalysed reaction is UDP-N-acetyl-alpha-D-muramoyl-L-alanine + D-glutamate + ATP = UDP-N-acetyl-alpha-D-muramoyl-L-alanyl-D-glutamate + ADP + phosphate + H(+). It participates in cell wall biogenesis; peptidoglycan biosynthesis. Cell wall formation. Catalyzes the addition of glutamate to the nucleotide precursor UDP-N-acetylmuramoyl-L-alanine (UMA). This is UDP-N-acetylmuramoylalanine--D-glutamate ligase from Microcystis aeruginosa (strain NIES-843 / IAM M-2473).